A 192-amino-acid polypeptide reads, in one-letter code: Riboflavin kinase (192 aa).

The Mg(2+) site is built by threonine 47 and asparagine 49. Glutamate 129 (nucleophile) is an active-site residue.

The protein belongs to the flavokinase family. The cofactor is Zn(2+). Mg(2+) is required as a cofactor.

The catalysed reaction is riboflavin + ATP = FMN + ADP + H(+). The protein operates within cofactor biosynthesis; FMN biosynthesis; FMN from riboflavin (ATP route): step 1/1. Its function is as follows. Catalyzes the phosphorylation of riboflavin (vitamin B2) to form flavin mononucleotide (FMN) coenzyme. The sequence is that of Riboflavin kinase (FMN1) from Yarrowia lipolytica (strain CLIB 122 / E 150) (Yeast).